The sequence spans 493 residues: UDP-N-acetylmuramate--L-alanine ligase (493 aa).

126-132 lines the ATP pocket; that stretch reads GTHGKTT.

The protein belongs to the MurCDEF family.

The protein resides in the cytoplasm. The enzyme catalyses UDP-N-acetyl-alpha-D-muramate + L-alanine + ATP = UDP-N-acetyl-alpha-D-muramoyl-L-alanine + ADP + phosphate + H(+). It participates in cell wall biogenesis; peptidoglycan biosynthesis. Its function is as follows. Cell wall formation. The sequence is that of UDP-N-acetylmuramate--L-alanine ligase from Hamiltonella defensa subsp. Acyrthosiphon pisum (strain 5AT).